Reading from the N-terminus, the 323-residue chain is MSGKPPAIFLMGPTAAGKTDLAIELTTVLPCELISVDSALVYRGMDIGSAKPSKEVLAAHPHRLIDIRDPAQSYSAAQFRTDALEAMAEITARGKIPLLVGGTMLYYKALIDGLADMPAADATVRAELEAQAEALGLAELHRQLAEVDPESAARIHPNDPQRLIRALEVYRVSGESMTAHRRRQFAESRGADAGAGGHLPYTVASLAIAPTDRHILHQRIALRFSQMLEQGFVDEVRSLRARSDLHAGLPSIRAVGYRQVWDYLDGKLTENEMRERGIIATRQLAKRQFTWLRGWPDVHWLDSLACDNLSRTLKYLGAISILS.

12–19 contacts ATP; that stretch reads GPTAAGKT. 14–19 serves as a coordination point for substrate; it reads TAAGKT. Interaction with substrate tRNA stretches follow at residues 37-40 and 161-165; these read DSAL and QRLIR.

It belongs to the IPP transferase family. Monomer. It depends on Mg(2+) as a cofactor.

It catalyses the reaction adenosine(37) in tRNA + dimethylallyl diphosphate = N(6)-dimethylallyladenosine(37) in tRNA + diphosphate. In terms of biological role, catalyzes the transfer of a dimethylallyl group onto the adenine at position 37 in tRNAs that read codons beginning with uridine, leading to the formation of N6-(dimethylallyl)adenosine (i(6)A). This is tRNA dimethylallyltransferase from Pseudomonas putida (strain ATCC 700007 / DSM 6899 / JCM 31910 / BCRC 17059 / LMG 24140 / F1).